Here is a 409-residue protein sequence, read N- to C-terminus: F-box/kelch-repeat protein At1g48625 (409 aa).

An F-box domain is found at 2–49 (ATMISNLPRDLMEEILSRVPLKSMRAVRLTCKNWHTLSITISESLAKM). Kelch repeat units lie at residues 169-218 (FIDY…LKGN) and 221-266 (WCAR…ILSC).

This Arabidopsis thaliana (Mouse-ear cress) protein is F-box/kelch-repeat protein At1g48625.